Here is a 170-residue protein sequence, read N- to C-terminus: Lipoprotein signal peptidase (170 aa).

The next 3 membrane-spanning stretches (helical) occupy residues 5–25 (IVGV…KAYA), 62–82 (SNLI…VLFV), and 89–111 (STIC…LRFG). Catalysis depends on residues Asp115 and Asp133. Residues 126 to 146 (WPAFNFADVCVTCGVICFLCL) form a helical membrane-spanning segment.

It belongs to the peptidase A8 family.

It localises to the cell inner membrane. It carries out the reaction Release of signal peptides from bacterial membrane prolipoproteins. Hydrolyzes -Xaa-Yaa-Zaa-|-(S,diacylglyceryl)Cys-, in which Xaa is hydrophobic (preferably Leu), and Yaa (Ala or Ser) and Zaa (Gly or Ala) have small, neutral side chains.. Its pathway is protein modification; lipoprotein biosynthesis (signal peptide cleavage). Its function is as follows. This protein specifically catalyzes the removal of signal peptides from prolipoproteins. This is Lipoprotein signal peptidase from Anaplasma marginale (strain Florida).